A 318-amino-acid polypeptide reads, in one-letter code: NADH-ubiquinone oxidoreductase chain 1 (318 aa).

A run of 8 helical transmembrane segments spans residues 2 to 22, 70 to 90, 100 to 120, 147 to 167, 171 to 191, 217 to 237, 254 to 276, and 294 to 314; these read FMIN…FLTL, MFII…IPLP, LGIL…LWSG, AIIL…TLII, YLWL…STLA, AGPF…MNIF, LYSI…IRAS, and LPLT…LSSI.

Belongs to the complex I subunit 1 family. Core subunit of respiratory chain NADH dehydrogenase (Complex I) which is composed of 45 different subunits.

The protein localises to the mitochondrion inner membrane. The enzyme catalyses a ubiquinone + NADH + 5 H(+)(in) = a ubiquinol + NAD(+) + 4 H(+)(out). Core subunit of the mitochondrial membrane respiratory chain NADH dehydrogenase (Complex I) which catalyzes electron transfer from NADH through the respiratory chain, using ubiquinone as an electron acceptor. Essential for the catalytic activity and assembly of complex I. The chain is NADH-ubiquinone oxidoreductase chain 1 (MT-ND1) from Equus asinus (Donkey).